The following is a 341-amino-acid chain: 3-keto-steroid reductase/17-beta-hydroxysteroid dehydrogenase 7 (341 aa).

Over 1–229 (MRKVVLITGA…VACPGTALTN (229 aa)) the chain is Extracellular. 8 to 15 (TGASSGIG) contributes to the NAD(+) binding site. A glycan (N-linked (GlcNAc...) asparagine) is linked at N37. Substrate is bound at residue S171. N178 is a glycosylation site (N-linked (GlcNAc...) asparagine). Y193 (proton acceptor) is an active-site residue. N-linked (GlcNAc...) asparagine glycosylation occurs at N229. A helical membrane pass occupies residues 230–250 (LTYGILPPFIWTLLMPAILLL). The Cytoplasmic segment spans residues 251-341 (RFFANAFTLT…NQARLSGSCL (91 aa)).

The protein belongs to the short-chain dehydrogenases/reductases (SDR) family. ERG27 subfamily. In terms of assembly, binds to the short form of prolactin receptor. Post-translationally, phosphorylated. Highly expressed in adrenal gland, liver, lung and thymus. Expressed in breast, ovaries, pituitary gland, pregnant uterus, prostate, kidney, lymph node, small intestine, spinal cord and trachea. Weakly expressed in all other tissues tested. As to expression, expressed in eye ciliary epithelial cells and neuroendocrine cells.

It is found in the endoplasmic reticulum membrane. It carries out the reaction 17beta-estradiol + NADP(+) = estrone + NADPH + H(+). The catalysed reaction is a 3beta-hydroxysteroid + NADP(+) = a 3-oxosteroid + NADPH + H(+). The enzyme catalyses 3-dehydro-4alpha-methylzymosterol + NADPH + H(+) = 4alpha-methylzymosterol + NADP(+). It catalyses the reaction zymosterone + NADPH + H(+) = zymosterol + NADP(+). It carries out the reaction 4alpha-methyl-5alpha-cholest-8-en-3-one + NADPH + H(+) = 4alpha-methyl-5alpha-cholest-8-en-3beta-ol + NADP(+). The catalysed reaction is 4alpha-methyl-5alpha-cholest-7-en-3beta-ol + NADP(+) = 4alpha-methyl-5alpha-cholest-7-en-3-one + NADPH + H(+). The enzyme catalyses 5alpha-cholest-8-en-3-one + NADPH + H(+) = 5alpha-cholest-8-en-3beta-ol + NADP(+). It catalyses the reaction 5alpha-androstane-3beta,17beta-diol + NADP(+) = 17beta-hydroxy-5alpha-androstan-3-one + NADPH + H(+). It carries out the reaction progesterone + NADPH + H(+) = 3beta-hydroxypregn-4-ene-20-one + NADP(+). It participates in steroid biosynthesis; estrogen biosynthesis. The protein operates within steroid biosynthesis; zymosterol biosynthesis; zymosterol from lanosterol: step 5/6. Its activity is regulated as follows. Estradiol 17-beta-dehydrogenase and dihydrotestosterone oxidoreductase activities are selectively inhibited by 4-methyl-4-aza-5alpha-androstane derivatives, such as 17beta-[(N-Heptyl)methylamino]-4-aza-5r-androstan-3-one and 17beta-(N-Decylformamido)-4-aza-5r-androstan-3-one. Functionally, bifunctional enzyme involved in steroid-hormone metabolism and cholesterol biosynthesis. Catalyzes the NADP(H)-dependent reduction of estrogens and androgens and regulates the biological potency of these steroids. Converts estrone (E1) to a more potent estrogen, 17beta-estradiol (E2). Converts dihydrotestosterone (DHT) to its inactive form 5a-androstane-3b,17b-diol. Converts moderately progesterone to 3beta-hydroxypregn-4-ene-20-one, leading to its inactivation. Additionally, participates in the post-squalene cholesterol biosynthesis, as a 3-ketosteroid reductase. Does not have enzymatic activities toward E1 and DHT. This chain is 3-keto-steroid reductase/17-beta-hydroxysteroid dehydrogenase 7 (HSD17B7), found in Homo sapiens (Human).